Reading from the N-terminus, the 108-residue chain is Translation initiation factor 1A (108 aa).

The S1-like domain maps to 11 to 85; sequence SVKEVPKPAE…NKCDIIYKYS (75 aa).

The protein belongs to the eIF-1A family.

Seems to be required for maximal rate of protein biosynthesis. Enhances ribosome dissociation into subunits and stabilizes the binding of the initiator Met-tRNA(I) to 40 S ribosomal subunits. This is Translation initiation factor 1A (eIF1A) from Sulfurisphaera tokodaii (strain DSM 16993 / JCM 10545 / NBRC 100140 / 7) (Sulfolobus tokodaii).